Reading from the N-terminus, the 162-residue chain is Peptide methionine sulfoxide reductase MsrA (162 aa).

Cysteine 16 is an active-site residue.

This sequence belongs to the MsrA Met sulfoxide reductase family.

It catalyses the reaction L-methionyl-[protein] + [thioredoxin]-disulfide + H2O = L-methionyl-(S)-S-oxide-[protein] + [thioredoxin]-dithiol. The enzyme catalyses [thioredoxin]-disulfide + L-methionine + H2O = L-methionine (S)-S-oxide + [thioredoxin]-dithiol. Functionally, has an important function as a repair enzyme for proteins that have been inactivated by oxidation. Catalyzes the reversible oxidation-reduction of methionine sulfoxide in proteins to methionine. This Geobacter sulfurreducens (strain ATCC 51573 / DSM 12127 / PCA) protein is Peptide methionine sulfoxide reductase MsrA.